The sequence spans 82 residues: Turripeptide Gsp9.2 (82 aa).

Residues methionine 1–glycine 23 form the signal peptide. The propeptide occupies arginine 24–arginine 46. Residues proline 49 and proline 50 each carry the 4-hydroxyproline modification. 3 disulfides stabilise this stretch: cysteine 53–cysteine 68, cysteine 58–cysteine 72, and cysteine 64–cysteine 79. Glutamate 56 bears the 4-carboxyglutamate mark.

The protein belongs to the Pg turripeptide superfamily. As to expression, expressed by the venom duct.

The protein localises to the secreted. In Gemmula speciosa (Splendid gem-turris), this protein is Turripeptide Gsp9.2.